A 285-amino-acid polypeptide reads, in one-letter code: Tryptophan synthase alpha chain (285 aa).

Residues E53 and D64 each act as proton acceptor in the active site.

Belongs to the TrpA family. In terms of assembly, tetramer of two alpha and two beta chains.

It catalyses the reaction (1S,2R)-1-C-(indol-3-yl)glycerol 3-phosphate + L-serine = D-glyceraldehyde 3-phosphate + L-tryptophan + H2O. It participates in amino-acid biosynthesis; L-tryptophan biosynthesis; L-tryptophan from chorismate: step 5/5. Its function is as follows. The alpha subunit is responsible for the aldol cleavage of indoleglycerol phosphate to indole and glyceraldehyde 3-phosphate. This is Tryptophan synthase alpha chain from Bordetella bronchiseptica (strain ATCC BAA-588 / NCTC 13252 / RB50) (Alcaligenes bronchisepticus).